Here is a 441-residue protein sequence, read N- to C-terminus: Serine carboxypeptidase-like 4 (441 aa).

The first 29 residues, 1 to 29, serve as a signal peptide directing secretion; it reads MANNNVYSVLKSLLLLLHLVFLSKQHVDS. Cystine bridges form between Cys-88–Cys-331, Cys-252–Cys-266, and Cys-290–Cys-297. An N-linked (GlcNAc...) asparagine glycan is attached at Asn-109. The active site involves Ser-184. N-linked (GlcNAc...) asparagine glycosylation is present at Asn-350. Asp-366 is a catalytic residue. A glycan (N-linked (GlcNAc...) asparagine) is linked at Asn-382. His-419 is an active-site residue.

This sequence belongs to the peptidase S10 family. As to expression, ubiquitous.

The protein resides in the secreted. Functionally, probable carboxypeptidase. In Arabidopsis thaliana (Mouse-ear cress), this protein is Serine carboxypeptidase-like 4 (SCPL4).